The sequence spans 213 residues: tRNA (guanine-N(7)-)-methyltransferase (213 aa).

S-adenosyl-L-methionine is bound by residues E44, E69, D96, and D118. D118 is an active-site residue. Substrate is bound by residues K122, D154, and 191–194 (TEYE).

The protein belongs to the class I-like SAM-binding methyltransferase superfamily. TrmB family.

It carries out the reaction guanosine(46) in tRNA + S-adenosyl-L-methionine = N(7)-methylguanosine(46) in tRNA + S-adenosyl-L-homocysteine. Its pathway is tRNA modification; N(7)-methylguanine-tRNA biosynthesis. In terms of biological role, catalyzes the formation of N(7)-methylguanine at position 46 (m7G46) in tRNA. In Exiguobacterium sibiricum (strain DSM 17290 / CCUG 55495 / CIP 109462 / JCM 13490 / 255-15), this protein is tRNA (guanine-N(7)-)-methyltransferase.